The primary structure comprises 312 residues: Small ribosomal subunit protein uS2m (312 aa).

It belongs to the universal ribosomal protein uS2 family.

It localises to the mitochondrion. This Acanthamoeba castellanii (Amoeba) protein is Small ribosomal subunit protein uS2m (RPS2).